The following is a 291-amino-acid chain: Methionine aminopeptidase (291 aa).

Histidine 118 is a binding site for substrate. A divalent metal cation contacts are provided by aspartate 135, aspartate 146, and histidine 209. Histidine 216 lines the substrate pocket. A divalent metal cation contacts are provided by glutamate 241 and glutamate 273.

This sequence belongs to the peptidase M24A family. Methionine aminopeptidase type 1 subfamily. Monomer. Requires Co(2+) as cofactor. Zn(2+) serves as cofactor. It depends on Mn(2+) as a cofactor. The cofactor is Fe(2+).

The enzyme catalyses Release of N-terminal amino acids, preferentially methionine, from peptides and arylamides.. Its function is as follows. Removes the N-terminal methionine from nascent proteins. The N-terminal methionine is often cleaved when the second residue in the primary sequence is small and uncharged (Met-Ala-, Cys, Gly, Pro, Ser, Thr, or Val). Requires deformylation of the N(alpha)-formylated initiator methionine before it can be hydrolyzed. This Chlamydia pneumoniae (Chlamydophila pneumoniae) protein is Methionine aminopeptidase.